The primary structure comprises 480 residues: Glutamate--tRNA ligase (480 aa).

Positions 21-31 (PSPTGYLHVGG) match the 'HIGH' region motif. The span at 122–146 (NTQEQNKQKPRYDRHCLGDHKHSPE) shows a compositional bias: basic and acidic residues. Residues 122-149 (NTQEQNKQKPRYDRHCLGDHKHSPEQPH) form a disordered region. Residues 248–252 (KLSKR) carry the 'KMSKS' region motif. K251 is a binding site for ATP.

This sequence belongs to the class-I aminoacyl-tRNA synthetase family. Glutamate--tRNA ligase type 1 subfamily. Monomer.

Its subcellular location is the cytoplasm. It catalyses the reaction tRNA(Glu) + L-glutamate + ATP = L-glutamyl-tRNA(Glu) + AMP + diphosphate. In terms of biological role, catalyzes the attachment of glutamate to tRNA(Glu) in a two-step reaction: glutamate is first activated by ATP to form Glu-AMP and then transferred to the acceptor end of tRNA(Glu). The protein is Glutamate--tRNA ligase of Pasteurella multocida (strain Pm70).